Consider the following 173-residue polypeptide: Acireductone dioxygenase 1 (173 aa).

4 residues coordinate Fe(2+): histidine 96, histidine 98, glutamate 102, and histidine 140. Histidine 96, histidine 98, glutamate 102, and histidine 140 together coordinate Ni(2+).

Belongs to the acireductone dioxygenase (ARD) family. In terms of assembly, monomer. It depends on Fe(2+) as a cofactor. Requires Ni(2+) as cofactor.

The catalysed reaction is 1,2-dihydroxy-5-(methylsulfanyl)pent-1-en-3-one + O2 = 3-(methylsulfanyl)propanoate + CO + formate + 2 H(+). The enzyme catalyses 1,2-dihydroxy-5-(methylsulfanyl)pent-1-en-3-one + O2 = 4-methylsulfanyl-2-oxobutanoate + formate + 2 H(+). It participates in amino-acid biosynthesis; L-methionine biosynthesis via salvage pathway; L-methionine from S-methyl-5-thio-alpha-D-ribose 1-phosphate: step 5/6. In terms of biological role, catalyzes 2 different reactions between oxygen and the acireductone 1,2-dihydroxy-3-keto-5-methylthiopentene (DHK-MTPene) depending upon the metal bound in the active site. Fe-containing acireductone dioxygenase (Fe-ARD) produces formate and 2-keto-4-methylthiobutyrate (KMTB), the alpha-ketoacid precursor of methionine in the methionine recycle pathway. Ni-containing acireductone dioxygenase (Ni-ARD) produces methylthiopropionate, carbon monoxide and formate, and does not lie on the methionine recycle pathway. This is Acireductone dioxygenase 1 from Pectobacterium atrosepticum (strain SCRI 1043 / ATCC BAA-672) (Erwinia carotovora subsp. atroseptica).